The primary structure comprises 322 residues: Olfactory receptor 1J1 (322 aa).

The Extracellular segment spans residues 1 to 25; that stretch reads MSPENQSSVSEFLLLGLPIRPEQQA. N5 carries an N-linked (GlcNAc...) asparagine glycan. A helical membrane pass occupies residues 26–49; it reads VFFALFLGMYLTTVLGNLLIMLLI. Residues 50–57 are Cytoplasmic-facing; that stretch reads QLDSHLHT. Residues 58–79 form a helical membrane-spanning segment; that stretch reads PMYFFLSHLALTDISFSSVTVP. The Extracellular portion of the chain corresponds to 80–100; it reads KMLMNMQTQHLAVFYKGCISQ. Residues C97 and C189 are joined by a disulfide bond. The chain crosses the membrane as a helical span at residues 101-120; the sequence is TYFFIFFADLDSFLITSMAY. Residues 121–139 lie on the Cytoplasmic side of the membrane; it reads DRYVAICHPLHYATIMTQS. The chain crosses the membrane as a helical span at residues 140–158; sequence QCVMLVAGSWVIACACALL. The Extracellular portion of the chain corresponds to 159-196; sequence HTLLLAQLSFCADHIIPHYFCDLGALLKLSCSDTSLNQ. A helical transmembrane segment spans residues 197 to 219; sequence LAIFTAALTAIMLPFLCILVSYG. Over 220–236 the chain is Cytoplasmic; it reads HIGVTILQIPSTKGICK. A helical transmembrane segment spans residues 237–259; that stretch reads ALSTCGSHLSVVTIYYRTIIGLY. At 260–272 the chain is on the extracellular side; that stretch reads FLPPSSNTNDKNI. A helical transmembrane segment spans residues 273-292; the sequence is IASVIYTAVTPMLNPFIYSL. Residues 293 to 322 are Cytoplasmic-facing; the sequence is RNKDIKGALRKLLSRSGAVAHACNLNTLGG.

Belongs to the G-protein coupled receptor 1 family.

It is found in the cell membrane. Functionally, odorant receptor. In Homo sapiens (Human), this protein is Olfactory receptor 1J1.